We begin with the raw amino-acid sequence, 157 residues long: ATP synthase subunit b 1 (157 aa).

The chain crosses the membrane as a helical span at residues 7 to 29; that stretch reads LFGQMVTFALLVWFTMKYVWPPL.

The protein belongs to the ATPase B chain family. As to quaternary structure, F-type ATPases have 2 components, F(1) - the catalytic core - and F(0) - the membrane proton channel. F(1) has five subunits: alpha(3), beta(3), gamma(1), delta(1), epsilon(1). F(0) has three main subunits: a(1), b(2) and c(10-14). The alpha and beta chains form an alternating ring which encloses part of the gamma chain. F(1) is attached to F(0) by a central stalk formed by the gamma and epsilon chains, while a peripheral stalk is formed by the delta and b chains.

The protein localises to the cell inner membrane. Its function is as follows. F(1)F(0) ATP synthase produces ATP from ADP in the presence of a proton or sodium gradient. F-type ATPases consist of two structural domains, F(1) containing the extramembraneous catalytic core and F(0) containing the membrane proton channel, linked together by a central stalk and a peripheral stalk. During catalysis, ATP synthesis in the catalytic domain of F(1) is coupled via a rotary mechanism of the central stalk subunits to proton translocation. Component of the F(0) channel, it forms part of the peripheral stalk, linking F(1) to F(0). This chain is ATP synthase subunit b 1, found in Methylococcus capsulatus (strain ATCC 33009 / NCIMB 11132 / Bath).